The chain runs to 658 residues: ATP-dependent DNA helicase Rep (658 aa).

One can recognise a UvrD-like helicase ATP-binding domain in the interval 1-280; the sequence is MSLNFNQKNA…IKMEQNYRSY (280 aa). ATP is bound by residues 22-29 and arginine 278; that span reads AGAGSGKT. The UvrD-like helicase C-terminal domain occupies 281-564; that stretch reads GRILKAANKL…QLMTLHSSKG (284 aa).

This sequence belongs to the helicase family. UvrD subfamily. Homodimer.

It catalyses the reaction Couples ATP hydrolysis with the unwinding of duplex DNA by translocating in the 3'-5' direction.. The enzyme catalyses ATP + H2O = ADP + phosphate + H(+). Rep helicase is a single-stranded DNA-dependent ATPase involved in DNA replication; it can initiate unwinding at a nick in the DNA. It binds to the single-stranded DNA and acts in a progressive fashion along the DNA in the 3' to 5' direction. The sequence is that of ATP-dependent DNA helicase Rep from Buchnera aphidicola subsp. Schizaphis graminum (strain Sg).